The chain runs to 248 residues: Small ribosomal subunit protein uS3 (248 aa).

In terms of domain architecture, KH type-2 spans 39 to 111 (IRKYLNKVYK…EIVFNVVEVK (73 aa)). The tract at residues 222-248 (KPFEASAPRPQRRNRKEANNYVNAKKN) is disordered.

This sequence belongs to the universal ribosomal protein uS3 family. As to quaternary structure, part of the 30S ribosomal subunit. Forms a tight complex with proteins S10 and S14.

Binds the lower part of the 30S subunit head. Binds mRNA in the 70S ribosome, positioning it for translation. This is Small ribosomal subunit protein uS3 from Alteracholeplasma palmae (strain ATCC 49389 / J233) (Acholeplasma palmae).